We begin with the raw amino-acid sequence, 151 residues long: Transcriptional repressor NrdR (151 aa).

A zinc finger lies at cysteine 3–cysteine 34. Positions isoleucine 49 to threonine 139 constitute an ATP-cone domain.

This sequence belongs to the NrdR family. Requires Zn(2+) as cofactor.

Its function is as follows. Negatively regulates transcription of bacterial ribonucleotide reductase nrd genes and operons by binding to NrdR-boxes. In Acetivibrio thermocellus (strain ATCC 27405 / DSM 1237 / JCM 9322 / NBRC 103400 / NCIMB 10682 / NRRL B-4536 / VPI 7372) (Clostridium thermocellum), this protein is Transcriptional repressor NrdR.